The chain runs to 432 residues: MPAIMEKNMLVSESLRTTELLGHVKPIDSVVTWSSPGSSRQAIGEAFKNTIEEIERAAVRGEPADSDAFFVADLNGVYRQLLRWHAKLPRVQPFYAVKCNPDPKVLALLNKFGTGFDCASKGELEQILGLGVSPDRIVYANPCKAITYVRYAASKGINLMTFDNADELYKVKQHHPNSRLLLRISTDDSNSLCRLSLKFGASLDDTGKLLDIAKSLELNVVGVSFHVGSGSYDPSAFLDAIQRSRQVFDQGLERGFNFDLLDIGGGFMNDSFDGVADLIRSALDTYFDPSIRVISEPGRFFVSSSFTLAVNVIAKRKLDDEEKVMYYVNDGVYGSLNCILFDHQHPVARVLKCGSRFVYNDLVGTGQHRCFIWGPTCDSLDVIANDAHLPYELNVGDWIYFEDAGAYTVAAASCFNGFKTSRIVYLDTDILD.

N6-(pyridoxal phosphate)lysine is present on Lys98. Pyridoxal 5'-phosphate contacts are provided by residues Ser229, Gly266, and 296-299 (EPGR). 341-342 (FD) is a binding site for substrate. Cys377 serves as the catalytic Proton donor; shared with dimeric partner. Substrate is bound at residue Asp378. Tyr407 contacts pyridoxal 5'-phosphate.

This sequence belongs to the Orn/Lys/Arg decarboxylase class-II family. As to quaternary structure, homodimer. Only the dimer is catalytically active, as the active sites are constructed of residues from both monomers. Pyridoxal 5'-phosphate is required as a cofactor.

The protein resides in the cytoplasm. The catalysed reaction is L-ornithine + H(+) = putrescine + CO2. It participates in amine and polyamine biosynthesis; putrescine biosynthesis via L-ornithine pathway; putrescine from L-ornithine: step 1/1. Inhibited by antizyme (AZ) OAZ1 in response to polyamine levels. AZ inhibits the assembly of the functional homodimer by binding to ODC monomers and targeting them for ubiquitin-independent proteolytic destruction by the 26S proteasome. Catalyzes the first and rate-limiting step of polyamine biosynthesis that converts ornithine into putrescine, which is the precursor for the polyamines, spermidine and spermine. Polyamines are essential for cell proliferation and are implicated in cellular processes, ranging from DNA replication to apoptosis. This chain is Ornithine decarboxylase (spe1), found in Schizosaccharomyces pombe (strain 972 / ATCC 24843) (Fission yeast).